Reading from the N-terminus, the 546-residue chain is Crossover junction endonuclease EME1A (546 aa).

Disordered regions lie at residues 1–55 and 88–232; these read MSDF…FLDE and VISL…REKQ. The segment covering 28 to 49 has biased composition (polar residues); the sequence is PTDLNLDTEPSLQKQPPGSAST. Basic and acidic residues-rich tracts occupy residues 103-120 and 149-167; these read SSKK…KPCR and DAIE…VEKM. Positions 173 to 183 are enriched in polar residues; it reads TITSKSTSLSA. Residues 188–245 adopt a coiled-coil conformation; that stretch reads KKKMSKDEKTRAAEEKKLQKEQEKLQKAASKAEDAEHKKLEREKQKWAKEKDKALKCI. Positions 192–232 are enriched in basic and acidic residues; the sequence is SKDEKTRAAEEKKLQKEQEKLQKAASKAEDAEHKKLEREKQ. In terms of domain architecture, ERCC4 spans 278-478; the sequence is NPIQRSIVWT…PSLKSLLKVY (201 aa).

The protein belongs to the EME1/MMS4 family. Forms a heterodimer with MUS81. Mg(2+) serves as cofactor. The cofactor is Ca(2+).

The protein localises to the nucleus. Functionally, interacts with MUS81 to form a DNA structure-specific endonuclease with substrate preference for branched DNA structures with a 5'-end at the branch nick. Typical substrates include 3'-flap structures, D-loops, replication forks, nicked Holliday junctions and also intact Holliday junctions with a reduced efficiency. May be required in mitosis for the processing of stalled or collapsed replication fork intermediates. Plays a role in DNA repair and in genotoxic stress-induced homologous recombination (HR) in somatic cells. Mediates a subset of meiotic recombination events that are insensitive to crossover interference. This chain is Crossover junction endonuclease EME1A (EME1A), found in Arabidopsis thaliana (Mouse-ear cress).